The chain runs to 119 residues: Polyhedrin (119 aa).

This sequence belongs to the polyhedrin family.

In terms of biological role, major component of the virus occlusion bodies, which are large proteinaceous structures (polyhedra), that protect the virus from the outside environment for extended periods until they are ingested by insect larvae. The polypeptide is Polyhedrin (PH) (Antheraea pernyi nuclear polyhedrosis virus (ApNPV)).